Reading from the N-terminus, the 429-residue chain is Serine--tRNA ligase (429 aa).

236–238 (TAE) is an L-serine binding site. 267–269 (RSE) contributes to the ATP binding site. Position 290 (Glu-290) interacts with L-serine. 354 to 357 (EVSS) provides a ligand contact to ATP. Ser-390 provides a ligand contact to L-serine.

This sequence belongs to the class-II aminoacyl-tRNA synthetase family. Type-1 seryl-tRNA synthetase subfamily. As to quaternary structure, homodimer. The tRNA molecule binds across the dimer.

It localises to the cytoplasm. The catalysed reaction is tRNA(Ser) + L-serine + ATP = L-seryl-tRNA(Ser) + AMP + diphosphate + H(+). The enzyme catalyses tRNA(Sec) + L-serine + ATP = L-seryl-tRNA(Sec) + AMP + diphosphate + H(+). It participates in aminoacyl-tRNA biosynthesis; selenocysteinyl-tRNA(Sec) biosynthesis; L-seryl-tRNA(Sec) from L-serine and tRNA(Sec): step 1/1. In terms of biological role, catalyzes the attachment of serine to tRNA(Ser). Is also able to aminoacylate tRNA(Sec) with serine, to form the misacylated tRNA L-seryl-tRNA(Sec), which will be further converted into selenocysteinyl-tRNA(Sec). The protein is Serine--tRNA ligase of Wigglesworthia glossinidia brevipalpis.